Reading from the N-terminus, the 453-residue chain is Ribulose bisphosphate carboxylase large chain (453 aa).

The propeptide occupies 1 to 2; it reads MS. The residue at position 3 (P3) is an N-acetylproline. N6,N6,N6-trimethyllysine is present on K14. Substrate contacts are provided by N123 and T173. K175 functions as the Proton acceptor in the catalytic mechanism. Position 177 (K177) interacts with substrate. 3 residues coordinate Mg(2+): K201, D203, and E204. N6-carboxylysine is present on K201. H294 (proton acceptor) is an active-site residue. 3 residues coordinate substrate: R295, H327, and S379.

It belongs to the RuBisCO large chain family. Type I subfamily. As to quaternary structure, heterohexadecamer of 8 large chains and 8 small chains; disulfide-linked. The disulfide link is formed within the large subunit homodimers. It depends on Mg(2+) as a cofactor. Post-translationally, the disulfide bond which can form in the large chain dimeric partners within the hexadecamer appears to be associated with oxidative stress and protein turnover.

The protein resides in the plastid. It localises to the chloroplast. The catalysed reaction is 2 (2R)-3-phosphoglycerate + 2 H(+) = D-ribulose 1,5-bisphosphate + CO2 + H2O. It catalyses the reaction D-ribulose 1,5-bisphosphate + O2 = 2-phosphoglycolate + (2R)-3-phosphoglycerate + 2 H(+). Functionally, ruBisCO catalyzes two reactions: the carboxylation of D-ribulose 1,5-bisphosphate, the primary event in carbon dioxide fixation, as well as the oxidative fragmentation of the pentose substrate in the photorespiration process. Both reactions occur simultaneously and in competition at the same active site. The polypeptide is Ribulose bisphosphate carboxylase large chain (Sherardia arvensis (Blue field-madder)).